A 266-amino-acid chain; its full sequence is Interleukin-33 (266 aa).

The homeodomain-like HTH domain stretch occupies residues 1 to 67 (MRPRMKYSNS…ETSYFRKEPT (67 aa)). Positions 1 to 101 (MRPRMKYSNS…RSLLGSIQAF (101 aa)) are excised as a propeptide. Residues 66–108 (PTKRYSLKSGTKHEENFSAYPRDSRKRSLLGSIQAFAASVDTL) are interaction with RELA.

Belongs to the IL-1 family. Highly divergent. As to quaternary structure, (Microbial infection) Interacts (in reduced form) with H.polygyrus ARI; the interaction abolishes the interaction with its primary receptor IL1RL1. In terms of assembly, forms a 1:1:1 heterotrimeric complex with its primary high-affinity receptor IL1RL1 and the coreceptor IL1RAP. Interacts with cargo receptor TMED10; the interaction mediates the translocation from the cytoplasm into the ERGIC (endoplasmic reticulum-Golgi intermediate compartment) and thereby secretion. In terms of processing, the full-length protein can be released from cells and is able to signal via the IL1RL1/ST2 receptor. However, proteolytic processing by CELA1, CSTG/cathepsin G and ELANE/neutrophil elastase produces C-terminal peptides that are more active than the unprocessed full-length protein. May also be proteolytically processed by calpains. Proteolytic cleavage mediated by apoptotic caspases including CASP3 and CASP7 results in IL33 inactivation. In vitro proteolytic cleavage by CASP1 was reported but could not be confirmed in vivo suggesting that IL33 is probably not a direct substrate for that caspase.

The protein localises to the nucleus. It localises to the chromosome. The protein resides in the cytoplasm. Its subcellular location is the cytoplasmic vesicle. It is found in the secretory vesicle. The protein localises to the secreted. Its function is as follows. Cytokine that binds to and signals through the IL1RL1/ST2 receptor which in turn activates NF-kappa-B and MAPK signaling pathways in target cells. Involved in the maturation of Th2 cells inducing the secretion of T-helper type 2-associated cytokines. Also involved in activation of mast cells, basophils, eosinophils and natural killer cells. Acts as an enhancer of polarization of alternatively activated macrophages. Acts as a chemoattractant for Th2 cells, and may function as an 'alarmin', that amplifies immune responses during tissue injury. Induces rapid UCP2-dependent mitochondrial rewiring that attenuates the generation of reactive oxygen species and preserves the integrity of Krebs cycle required for persistent production of itaconate and subsequent GATA3-dependent differentiation of inflammation-resolving alternatively activated macrophages. Functionally, in quiescent endothelia the uncleaved form is constitutively and abundantly expressed, and acts as a chromatin-associated nuclear factor with transcriptional repressor properties, it may sequester nuclear NF-kappaB/RELA, lowering expression of its targets. This form is rapidely lost upon angiogenic or pro-inflammatory activation. The sequence is that of Interleukin-33 from Mus musculus (Mouse).